Consider the following 580-residue polypeptide: MLLQPLLLLLLPALLQSAQRYDQTPLDASSYYRSDLTGSSASSLDGFPHHNRCEPITISICKNIPYNMTIMPNLIGHTKQEEAGLEVHQFAPLVKIGCSADLQLFLCSLYVPVCTILERPIPPCRSLCESARVCETLMKTYNFNWPENLECSKFPVHGGEDLCVAENTTASSSTPAPTRSAPKVTTRKHQISVDSPHRNIGFVCPVQLKTPLGMGYELKVGGKDLHDCGAPCHAMFFPERERTVLRYWVGSWAAICVASCLFTVLTFLIDSSRFRYPERAIVFLAVCYLVVGCAYVAGLGAGDSVSCREPFPPPVKLGRLQMMSTITQGHRQTTACTVLFMALYFCCMAAFAWWSCLAFAWFLAAGLKWGHEAIENKSHLFHLVAWAVPALQTISVLALAKVEGDILSGVCFVGQLDTHSLGGFLILPLCIYLSIGALFLLAGFISLFRIRTVMKTDGKRTDKLERLMLRIGFFSGLFILPALGLLGCLFYEYYNFDEWMIQWHRDICKPFSIPCPAARPPGTPEARPIFQIYMVKYLCSMLVGVTSSVWLYSSKTMVSWRNFVERLQGKEPRTRAQAYV.

The signal sequence occupies residues 1-17 (MLLQPLLLLLLPALLQS). The Extracellular portion of the chain corresponds to 18–248 (AQRYDQTPLD…ERERTVLRYW (231 aa)). In terms of domain architecture, FZ spans 48-166 (PHHNRCEPIT…HGGEDLCVAE (119 aa)). Cystine bridges form between Cys53–Cys114, Cys61–Cys107, Cys98–Cys134, Cys124–Cys163, and Cys128–Cys151. N-linked (GlcNAc...) asparagine glycosylation is present at Asn67. Asn167 is a glycosylation site (N-linked (GlcNAc...) asparagine). The chain crosses the membrane as a helical span at residues 249 to 269 (VGSWAAICVASCLFTVLTFLI). Over 270–279 (DSSRFRYPER) the chain is Cytoplasmic. The chain crosses the membrane as a helical span at residues 280 to 300 (AIVFLAVCYLVVGCAYVAGLG). Topologically, residues 301–342 (AGDSVSCREPFPPPVKLGRLQMMSTITQGHRQTTACTVLFMA) are extracellular. The helical transmembrane segment at 343–363 (LYFCCMAAFAWWSCLAFAWFL) threads the bilayer. The Cytoplasmic segment spans residues 364 to 379 (AAGLKWGHEAIENKSH). Residues 380–400 (LFHLVAWAVPALQTISVLALA) form a helical membrane-spanning segment. Residues 401–424 (KVEGDILSGVCFVGQLDTHSLGGF) are Extracellular-facing. The helical transmembrane segment at 425–445 (LILPLCIYLSIGALFLLAGFI) threads the bilayer. Over 446 to 470 (SLFRIRTVMKTDGKRTDKLERLMLR) the chain is Cytoplasmic. A helical membrane pass occupies residues 471 to 491 (IGFFSGLFILPALGLLGCLFY). Over 492 to 531 (EYYNFDEWMIQWHRDICKPFSIPCPAARPPGTPEARPIFQ) the chain is Extracellular. A helical membrane pass occupies residues 532–552 (IYMVKYLCSMLVGVTSSVWLY). The Cytoplasmic segment spans residues 553–580 (SSKTMVSWRNFVERLQGKEPRTRAQAYV). A Lys-Thr-X-X-X-Trp motif, mediates interaction with the PDZ domain of Dvl family members motif is present at residues 555 to 560 (KTMVSW). Residues 578-580 (AYV) carry the PDZ-binding motif.

Belongs to the G-protein coupled receptor Fz/Smo family.

It is found in the cell membrane. In terms of biological role, receptor for Wnt proteins. Most of frizzled receptors are coupled to the beta-catenin canonical signaling pathway, which leads to the activation of disheveled proteins, inhibition of GSK-3 kinase, nuclear accumulation of beta-catenin and activation of Wnt target genes. A second signaling pathway involving PKC and calcium fluxes has been seen for some family members, but it is not yet clear if it represents a distinct pathway or if it can be integrated in the canonical pathway, as PKC seems to be required for Wnt-mediated inactivation of GSK-3 kinase. Both pathways seem to involve interactions with G-proteins. Required to coordinate the cytoskeletons of epidermal cells to produce a parallel array of cuticular hairs and bristles. The protein is Frizzled (fz) of Drosophila virilis (Fruit fly).